Reading from the N-terminus, the 407-residue chain is Peptidase T (407 aa).

Position 82 (histidine 82) interacts with Zn(2+). Residue aspartate 84 is part of the active site. Aspartate 143 lines the Zn(2+) pocket. Glutamate 177 (proton acceptor) is an active-site residue. Glutamate 178, aspartate 200, and histidine 382 together coordinate Zn(2+).

It belongs to the peptidase M20B family. The cofactor is Zn(2+).

It is found in the cytoplasm. The enzyme catalyses Release of the N-terminal residue from a tripeptide.. Functionally, cleaves the N-terminal amino acid of tripeptides. The chain is Peptidase T from Streptococcus thermophilus (strain ATCC BAA-491 / LMD-9).